The sequence spans 385 residues: Flap endonuclease 1 (385 aa).

The N-domain stretch occupies residues 1-104 (MGILGLSKLI…GELAKRAERR (104 aa)). Position 34 (aspartate 34) interacts with Mg(2+). 2 residues coordinate DNA: arginine 47 and arginine 70. Positions 86, 158, 160, 179, and 181 each coordinate Mg(2+). The I-domain stretch occupies residues 122–253 (GIEKFNRRLV…KRAIELINTY (132 aa)). Glutamate 158 lines the DNA pocket. Glycine 231 and aspartate 233 together coordinate DNA. Residue aspartate 233 participates in Mg(2+) binding. An interaction with PCNA region spans residues 336–344 (TQVRLDSFF). Positions 346 to 385 (TLPSTPNATNAAKRKAEEAKKSANNKKAKTSGGGRGRRPK) are disordered. The span at 368–385 (ANNKKAKTSGGGRGRRPK) shows a compositional bias: basic residues.

It belongs to the XPG/RAD2 endonuclease family. FEN1 subfamily. In terms of assembly, interacts with PCNA. Three molecules of FEN1 bind to one PCNA trimer with each molecule binding to one PCNA monomer. PCNA stimulates the nuclease activity without altering cleavage specificity. The cofactor is Mg(2+). Phosphorylated. Phosphorylation upon DNA damage induces relocalization to the nuclear plasma.

Its subcellular location is the nucleus. It is found in the nucleolus. It localises to the nucleoplasm. The protein resides in the mitochondrion. Structure-specific nuclease with 5'-flap endonuclease and 5'-3' exonuclease activities involved in DNA replication and repair. During DNA replication, cleaves the 5'-overhanging flap structure that is generated by displacement synthesis when DNA polymerase encounters the 5'-end of a downstream Okazaki fragment. It enters the flap from the 5'-end and then tracks to cleave the flap base, leaving a nick for ligation. Also involved in the long patch base excision repair (LP-BER) pathway, by cleaving within the apurinic/apyrimidinic (AP) site-terminated flap. Acts as a genome stabilization factor that prevents flaps from equilibrating into structures that lead to duplications and deletions. Also possesses 5'-3' exonuclease activity on nicked or gapped double-stranded DNA, and exhibits RNase H activity. Also involved in replication and repair of rDNA and in repairing mitochondrial DNA. The protein is Flap endonuclease 1 of Drosophila simulans (Fruit fly).